A 413-amino-acid polypeptide reads, in one-letter code: Zinc finger CCCH domain-containing protein 6 (413 aa).

3 disordered regions span residues 28 to 61 (PSQV…FGGP), 159 to 191 (DSAS…TLPA), and 333 to 356 (QPGG…RDSK). Polar residues predominate over residues 176-189 (PSITDENTSTSSTL). The C3H1-type zinc-finger motif lies at 357 to 385 (PKIMKACMYFNSARGCRHGANCMYQHDAT). Polar residues predominate over residues 389 to 403 (PRNLNNGNINTSDMQ). Residues 389 to 413 (PRNLNNGNINTSDMQNAKRMRFDRD) form a disordered region.

In Arabidopsis thaliana (Mouse-ear cress), this protein is Zinc finger CCCH domain-containing protein 6.